A 150-amino-acid polypeptide reads, in one-letter code: MRVIVQRVLSASVASGDESAVHIGPGLLVLSGIAPADDQAALGWMCRKVVNLRIFDDEAGRMNRSVKDIGGEILLVSQFTLYSDVSSGNRPGFSGAAGYDIAKPLFEKFHQMVQQEMERPVATGWYGEHMQVALVNDGPVTLIIDSPTRS.

A Gly-cisPro motif, important for rejection of L-amino acids motif is present at residues 138-139; the sequence is GP.

Belongs to the DTD family. As to quaternary structure, homodimer.

It is found in the cytoplasm. The enzyme catalyses glycyl-tRNA(Ala) + H2O = tRNA(Ala) + glycine + H(+). It carries out the reaction a D-aminoacyl-tRNA + H2O = a tRNA + a D-alpha-amino acid + H(+). An aminoacyl-tRNA editing enzyme that deacylates mischarged D-aminoacyl-tRNAs. Also deacylates mischarged glycyl-tRNA(Ala), protecting cells against glycine mischarging by AlaRS. Acts via tRNA-based rather than protein-based catalysis; rejects L-amino acids rather than detecting D-amino acids in the active site. By recycling D-aminoacyl-tRNA to D-amino acids and free tRNA molecules, this enzyme counteracts the toxicity associated with the formation of D-aminoacyl-tRNA entities in vivo and helps enforce protein L-homochirality. The chain is D-aminoacyl-tRNA deacylase from Chlorobium phaeobacteroides (strain DSM 266 / SMG 266 / 2430).